Reading from the N-terminus, the 1301-residue chain is Zinc finger protein 532 (1301 aa).

3 disordered regions span residues 26–206 (PKAA…RETE), 223–266 (AEDK…SSSK), and 281–366 (KAAS…IKTI). The segment covering 32-52 (SGHDDHESHMKQNAHGEDDSH) has biased composition (basic and acidic residues). Residues 84–101 (PTGNGLHNGFLTASSLDS) show a composition bias toward polar residues. The segment covering 102 to 111 (YSKDGAKSLK) has biased composition (basic and acidic residues). The span at 122–133 (KDSTFSQFSPIS) shows a compositional bias: polar residues. S130, S133, and S134 each carry phosphoserine. Positions 136–151 (EEFDDDEKIEVDDPPD) are enriched in acidic residues. Residues 158–170 (SFRSNVLTGSAPQ) are compositionally biased toward polar residues. Position 175 is an N6-acetyllysine (K175). Polar residues predominate over residues 182 to 195 (ENSSKTGLSTSGNV). 2 stretches are compositionally biased toward basic and acidic residues: residues 196–206 (EKNKAVKRETE) and 223–250 (AEDK…EKND). T205 is modified (phosphothreonine). A phosphoserine mark is found at S252, S307, and S314. Over residues 303–315 (EVNDSPRAADKSP) the composition is skewed to basic and acidic residues. The span at 337–359 (SISSENSSKGSPSSPAGSTPAIP) shows a compositional bias: low complexity. Phosphoserine is present on S434. Residues K459 and K516 each participate in a glycyl lysine isopeptide (Lys-Gly) (interchain with G-Cter in SUMO2) cross-link. The C2H2-type 1; degenerate zinc finger occupies 616 to 635 (YKCLECGDSFALEKSLTQHY). The segment at 754–779 (LKCLECNEVFQDETSLATHFQQAADT) adopts a C2H2-type 2; degenerate zinc-finger fold. 5 consecutive C2H2-type zinc fingers follow at residues 783 to 805 (KTCT…QRIH), 842 to 865 (FRCV…QGSH), 870 to 893 (YKCP…YTQH), 905 to 927 (YKCS…FDQH), and 936 to 959 (FKCP…KSMH). A Glycyl lysine isopeptide (Lys-Gly) (interchain with G-Cter in SUMO2) cross-link involves residue K980. The interval 983-1017 (TQNSANQNKEDTKSMNGKEKLEKKSPSPVKKSMET) is disordered. Over residues 990 to 1017 (NKEDTKSMNGKEKLEKKSPSPVKKSMET) the composition is skewed to basic and acidic residues. 2 consecutive C2H2-type zinc fingers follow at residues 1025-1048 (WTCW…RKEH) and 1055-1078 (HPCR…RIKH). Residues 1085 to 1111 (YACSHCPDSRRTFTKRLMLEKHVQLMH) form a C2H2-type 10; degenerate zinc finger. Phosphoserine is present on S1140. Residues K1144 and K1167 each participate in a glycyl lysine isopeptide (Lys-Gly) (interchain with G-Cter in SUMO2) cross-link. The segment at 1203-1226 (YQCRECGLCYTSHVSLSRHLFIVH) adopts a C2H2-type 11 zinc-finger fold. Residues 1230 to 1263 (EPQPVSKQNGAGEDNQQENKPSHEDESPDGAVSD) are disordered. Residues 1264–1286 (RKCKVCAKTFETEAALNTHMRTH) form a C2H2-type 12 zinc finger.

This sequence belongs to the krueppel C2H2-type zinc-finger protein family.

The protein localises to the nucleus. Functionally, may be involved in transcriptional regulation. This is Zinc finger protein 532 (ZNF532) from Homo sapiens (Human).